We begin with the raw amino-acid sequence, 390 residues long: MSIQPSITAAPARSLHFAEVLMARESITPVDAGCQSYLMYKLEKLGFVCERHTINGVKNLIAKWGGGPLHFAFSGHTDVVPPGPLEKWKSPPFSPVVSQNKLYGRGAADMKTGISAMLAATERAIASLDEREVTYWWLITSDEEGEAEWGSKWINEYLTKRNVQLDMCLVGEPSATTQTGDTIKVGRRGSLSGTITVAGKQGHVAYPKTAVNAIHKASNIVNALTHYPFEEGSDDFPGTTLQITHMDTGSFTDNIVPSAVRIEFNVRYSWQYNQGSLAELLRQIISSVDMSALVSFSRPCEAYLSKPHNNAKRCLITSVEKAIKAATGRYPVISTSGGTSDGRFYASEKTQVVEVGVPNATIHQVNEHIHLSDLLTLEDIYTDILLSLSK.

A Zn(2+)-binding site is contributed by His-76. Asp-78 is a catalytic residue. Asp-109 provides a ligand contact to Zn(2+). The active-site Proton acceptor is Glu-143. Glu-144, Glu-172, and His-363 together coordinate Zn(2+).

Belongs to the peptidase M20A family. DapE subfamily. In terms of assembly, homodimer. Requires Zn(2+) as cofactor. The cofactor is Co(2+).

It catalyses the reaction N-succinyl-(2S,6S)-2,6-diaminopimelate + H2O = (2S,6S)-2,6-diaminopimelate + succinate. It functions in the pathway amino-acid biosynthesis; L-lysine biosynthesis via DAP pathway; LL-2,6-diaminopimelate from (S)-tetrahydrodipicolinate (succinylase route): step 3/3. Its function is as follows. Catalyzes the hydrolysis of N-succinyl-L,L-diaminopimelic acid (SDAP), forming succinate and LL-2,6-diaminopimelate (DAP), an intermediate involved in the bacterial biosynthesis of lysine and meso-diaminopimelic acid, an essential component of bacterial cell walls. This chain is Succinyl-diaminopimelate desuccinylase 1, found in Alteromonas mediterranea (strain DSM 17117 / CIP 110805 / LMG 28347 / Deep ecotype).